A 95-amino-acid chain; its full sequence is Aspartyl/glutamyl-tRNA(Asn/Gln) amidotransferase subunit C (95 aa).

It belongs to the GatC family. In terms of assembly, heterotrimer of A, B and C subunits.

The catalysed reaction is L-glutamyl-tRNA(Gln) + L-glutamine + ATP + H2O = L-glutaminyl-tRNA(Gln) + L-glutamate + ADP + phosphate + H(+). It catalyses the reaction L-aspartyl-tRNA(Asn) + L-glutamine + ATP + H2O = L-asparaginyl-tRNA(Asn) + L-glutamate + ADP + phosphate + 2 H(+). Allows the formation of correctly charged Asn-tRNA(Asn) or Gln-tRNA(Gln) through the transamidation of misacylated Asp-tRNA(Asn) or Glu-tRNA(Gln) in organisms which lack either or both of asparaginyl-tRNA or glutaminyl-tRNA synthetases. The reaction takes place in the presence of glutamine and ATP through an activated phospho-Asp-tRNA(Asn) or phospho-Glu-tRNA(Gln). This Prochlorococcus marinus (strain NATL1A) protein is Aspartyl/glutamyl-tRNA(Asn/Gln) amidotransferase subunit C.